A 141-amino-acid chain; its full sequence is Large ribosomal subunit protein uL11 (141 aa).

The protein belongs to the universal ribosomal protein uL11 family. In terms of assembly, part of the ribosomal stalk of the 50S ribosomal subunit. Interacts with L10 and the large rRNA to form the base of the stalk. L10 forms an elongated spine to which L12 dimers bind in a sequential fashion forming a multimeric L10(L12)X complex. Post-translationally, one or more lysine residues are methylated.

In terms of biological role, forms part of the ribosomal stalk which helps the ribosome interact with GTP-bound translation factors. The polypeptide is Large ribosomal subunit protein uL11 (Clostridium novyi (strain NT)).